The primary structure comprises 147 residues: MVHFTAEEKSTILSLWGKVNVEEAGGEALGRLLVVYPWTQRFFDSFGNLSSASAIMGNPKVKAHGKKVLTSFGEAVKNLDNLKPAFAKLSELHCDKLHVDPENFKLLGNVMVIILATHFGKEFTPDVQAAWQKLVSGVATALAHKYH.

The region spanning 3-147 is the Globin domain; sequence HFTAEEKSTI…VATALAHKYH (145 aa). Serine 14 and serine 51 each carry phosphoserine. Positions 64 and 93 each coordinate heme b.

The protein belongs to the globin family. Heterotetramer of two alpha chains and two epsilon chains in early embryonic hemoglobin Gower-2; two zeta chains and two epsilon chains in early embryonic hemoglobin Gower-1. In terms of tissue distribution, red blood cells.

The epsilon chain is a beta-type chain of early mammalian embryonic hemoglobin. This chain is Hemoglobin subunit epsilon (HBE1), found in Microcebus murinus (Gray mouse lemur).